Here is a 241-residue protein sequence, read N- to C-terminus: Phosphoribosylaminoimidazole-succinocarboxamide synthase (241 aa).

Belongs to the SAICAR synthetase family.

It catalyses the reaction 5-amino-1-(5-phospho-D-ribosyl)imidazole-4-carboxylate + L-aspartate + ATP = (2S)-2-[5-amino-1-(5-phospho-beta-D-ribosyl)imidazole-4-carboxamido]succinate + ADP + phosphate + 2 H(+). The protein operates within purine metabolism; IMP biosynthesis via de novo pathway; 5-amino-1-(5-phospho-D-ribosyl)imidazole-4-carboxamide from 5-amino-1-(5-phospho-D-ribosyl)imidazole-4-carboxylate: step 1/2. In Oenococcus oeni (strain ATCC BAA-331 / PSU-1), this protein is Phosphoribosylaminoimidazole-succinocarboxamide synthase.